The sequence spans 542 residues: Polysialoglycoprotein (542 aa).

Residues 1–21 (MIMGGVRELLLVVMTVGVVKV) form the signal peptide. Positions 22 to 120 (SCYPVGKSQK…TSEAATGPSG (99 aa)) are excised as a propeptide. Residues 70–542 (EEYLETNEVE…GPSGDDAMDI (473 aa)) are disordered. The span at 78–95 (VESQASPNHGSSPANDAL) shows a compositional bias: polar residues. Basic and acidic residues predominate over residues 97–106 (SEEKLRRVSS). The segment covering 107-116 (DDAATSEAAT) has biased composition (low complexity). 32 tandem repeats follow at residues 121–133 (DDATSEAATGPSG), 134–146 (DDATSEAATGPSG), 147–159 (DDATSEAATGPSG), 160–172 (DDATSEAATGPSG), 173–185 (DDATSEAATGPSG), 186–198 (DDATSEAATGPSG), 199–211 (DDATSEAATGPSG), 212–224 (DDATSEAATGPSG), 225–237 (DDATSEAATGPSG), 238–250 (DDATSEAATGPSG), 251–263 (DDATSEAATGPSG), 264–276 (DDATSEAATGPSG), 277–289 (DDATSEAATGPSG), 290–302 (DDATSEAATGPSG), 303–315 (DDATSEAATGPSG), 316–328 (DDATSEAATGPSG), 329–341 (DDATSEAATGPSG), 342–354 (DDATSEAATGPSG), 355–367 (DDATSEAATGPSG), 368–380 (DDATSEAATGPSG), 381–393 (DDATSEAATGPSG), 394–406 (DDATSEAATGPSG), 407–419 (DDATSEAATGPSG), 420–432 (DDATSEAATGPSG), 433–445 (DDATSEAATGPSG), 446–458 (DDATSEAATGPSG), 459–471 (DDATSEAATGPSG), 472–484 (DDATSEAATGPSG), 485–497 (DDATSEAATGPSG), 498–510 (DDATSEAATGPSG), 511–523 (DDATSEAATGPSG), and 524–536 (DDATSEAATGPSG). Residues 121-536 (DDATSEAATG…TSEAATGPSG (416 aa)) form a 32 X 13 AA tandem repeats of D-D-A-T-S-E-A-A-T-G-P-S-G region. An O-linked (GalNAc...) threonine glycan is attached at Thr124. Ser125 is a glycosylation site (O-linked (GalNAc...) serine). Thr129 and Thr137 each carry an O-linked (GalNAc...) threonine glycan. O-linked (GalNAc...) serine glycosylation occurs at Ser138. O-linked (GalNAc...) threonine glycans are attached at residues Thr142 and Thr150. O-linked (GalNAc...) serine glycosylation occurs at Ser151. O-linked (GalNAc...) threonine glycans are attached at residues Thr155 and Thr163. A glycan (O-linked (GalNAc...) serine) is linked at Ser164. 2 O-linked (GalNAc...) threonine glycosylation sites follow: Thr168 and Thr176. The O-linked (GalNAc...) serine glycan is linked to Ser177. O-linked (GalNAc...) threonine glycosylation is found at Thr181 and Thr189. Ser190 carries O-linked (GalNAc...) serine glycosylation. 2 O-linked (GalNAc...) threonine glycosylation sites follow: Thr194 and Thr202. Ser203 carries O-linked (GalNAc...) serine glycosylation. 2 O-linked (GalNAc...) threonine glycosylation sites follow: Thr207 and Thr215. An O-linked (GalNAc...) serine glycan is attached at Ser216. O-linked (GalNAc...) threonine glycosylation is found at Thr220 and Thr228. Ser229 is a glycosylation site (O-linked (GalNAc...) serine). Thr233 and Thr241 each carry an O-linked (GalNAc...) threonine glycan. Ser242 is a glycosylation site (O-linked (GalNAc...) serine). O-linked (GalNAc...) threonine glycosylation is found at Thr246 and Thr254. Ser255 carries an O-linked (GalNAc...) serine glycan. Residues Thr259 and Thr267 are each glycosylated (O-linked (GalNAc...) threonine). The O-linked (GalNAc...) serine glycan is linked to Ser268. Residues Thr272 and Thr280 are each glycosylated (O-linked (GalNAc...) threonine). O-linked (GalNAc...) serine glycosylation is present at Ser281. Residues Thr285 and Thr293 are each glycosylated (O-linked (GalNAc...) threonine). The O-linked (GalNAc...) serine glycan is linked to Ser294. O-linked (GalNAc...) threonine glycans are attached at residues Thr298 and Thr306. Residue Ser307 is glycosylated (O-linked (GalNAc...) serine). O-linked (GalNAc...) threonine glycosylation is found at Thr311 and Thr319. Ser320 carries an O-linked (GalNAc...) serine glycan. O-linked (GalNAc...) threonine glycosylation is found at Thr324 and Thr332. Residue Ser333 is glycosylated (O-linked (GalNAc...) serine). 2 O-linked (GalNAc...) threonine glycosylation sites follow: Thr337 and Thr345. The O-linked (GalNAc...) serine glycan is linked to Ser346. Residues Thr350 and Thr358 are each glycosylated (O-linked (GalNAc...) threonine). A glycan (O-linked (GalNAc...) serine) is linked at Ser359. Thr363 and Thr371 each carry an O-linked (GalNAc...) threonine glycan. Ser372 carries an O-linked (GalNAc...) serine glycan. O-linked (GalNAc...) threonine glycans are attached at residues Thr376 and Thr384. Ser385 carries O-linked (GalNAc...) serine glycosylation. Residues Thr389 and Thr397 are each glycosylated (O-linked (GalNAc...) threonine). Ser398 carries O-linked (GalNAc...) serine glycosylation. Residues Thr402 and Thr410 are each glycosylated (O-linked (GalNAc...) threonine). O-linked (GalNAc...) serine glycosylation is present at Ser411. Thr415 and Thr423 each carry an O-linked (GalNAc...) threonine glycan. Residue Ser424 is glycosylated (O-linked (GalNAc...) serine). O-linked (GalNAc...) threonine glycans are attached at residues Thr428 and Thr436. Ser437 is a glycosylation site (O-linked (GalNAc...) serine). Thr441 and Thr449 each carry an O-linked (GalNAc...) threonine glycan. The O-linked (GalNAc...) serine glycan is linked to Ser450. Thr454 and Thr462 each carry an O-linked (GalNAc...) threonine glycan. The O-linked (GalNAc...) serine glycan is linked to Ser463. O-linked (GalNAc...) threonine glycosylation is found at Thr467 and Thr475. An O-linked (GalNAc...) serine glycan is attached at Ser476. Thr480 and Thr488 each carry an O-linked (GalNAc...) threonine glycan. The O-linked (GalNAc...) serine glycan is linked to Ser489. O-linked (GalNAc...) threonine glycans are attached at residues Thr493 and Thr501. Ser502 is a glycosylation site (O-linked (GalNAc...) serine). Thr506 and Thr514 each carry an O-linked (GalNAc...) threonine glycan. O-linked (GalNAc...) serine glycosylation occurs at Ser515. O-linked (GalNAc...) threonine glycosylation is found at Thr519 and Thr527. O-linked (GalNAc...) serine glycosylation is present at Ser528. O-linked (GalNAc...) threonine glycosylation is present at Thr532. Positions 537–542 (DDAMDI) are excised as a propeptide.

In terms of processing, most sialic acid residues exist in the form of polysialyl groups partly capped with deaminoneuraminic acid. As to expression, cortical alveoli of immature ovaries.

Its function is as follows. In response to egg activation, PSGP is discharged by exocytosis into the perivitelline space, where it undergoes rapid proteolysis into glycotridecapeptides. During fertilization and/or early development the glycotridecapeptides prevent polyspermy or are involved in the formation of a fertilization membrane. The polypeptide is Polysialoglycoprotein (Oncorhynchus mykiss (Rainbow trout)).